Consider the following 406-residue polypeptide: Tryptophan synthase beta chain (406 aa).

N6-(pyridoxal phosphate)lysine is present on K95.

Belongs to the TrpB family. As to quaternary structure, tetramer of two alpha and two beta chains. Pyridoxal 5'-phosphate serves as cofactor.

It carries out the reaction (1S,2R)-1-C-(indol-3-yl)glycerol 3-phosphate + L-serine = D-glyceraldehyde 3-phosphate + L-tryptophan + H2O. It participates in amino-acid biosynthesis; L-tryptophan biosynthesis; L-tryptophan from chorismate: step 5/5. Its function is as follows. The beta subunit is responsible for the synthesis of L-tryptophan from indole and L-serine. This chain is Tryptophan synthase beta chain, found in Azotobacter vinelandii (strain DJ / ATCC BAA-1303).